The sequence spans 260 residues: Acetylglutamate kinase (260 aa).

Substrate contacts are provided by residues 46–47 (GG), R68, and N160.

The protein belongs to the acetylglutamate kinase family. ArgB subfamily.

Its subcellular location is the cytoplasm. It catalyses the reaction N-acetyl-L-glutamate + ATP = N-acetyl-L-glutamyl 5-phosphate + ADP. It functions in the pathway amino-acid biosynthesis; L-arginine biosynthesis; N(2)-acetyl-L-ornithine from L-glutamate: step 2/4. Functionally, catalyzes the ATP-dependent phosphorylation of N-acetyl-L-glutamate. This Shewanella putrefaciens (strain CN-32 / ATCC BAA-453) protein is Acetylglutamate kinase.